Consider the following 584-residue polypeptide: Aspartate--tRNA(Asp/Asn) ligase (584 aa).

Residue Glu-173 participates in L-aspartate binding. An aspartate region spans residues 197-200 (QLFK). Position 219 (Arg-219) interacts with L-aspartate. Residues 219-221 (RDE) and Gln-228 each bind ATP. His-447 provides a ligand contact to L-aspartate. Glu-477 contributes to the ATP binding site. Arg-484 lines the L-aspartate pocket. 529–532 (GFDR) serves as a coordination point for ATP.

This sequence belongs to the class-II aminoacyl-tRNA synthetase family. Type 1 subfamily. Homodimer.

It localises to the cytoplasm. It carries out the reaction tRNA(Asx) + L-aspartate + ATP = L-aspartyl-tRNA(Asx) + AMP + diphosphate. Aspartyl-tRNA synthetase with relaxed tRNA specificity since it is able to aspartylate not only its cognate tRNA(Asp) but also tRNA(Asn). Reaction proceeds in two steps: L-aspartate is first activated by ATP to form Asp-AMP and then transferred to the acceptor end of tRNA(Asp/Asn). This Campylobacter hominis (strain ATCC BAA-381 / DSM 21671 / CCUG 45161 / LMG 19568 / NCTC 13146 / CH001A) protein is Aspartate--tRNA(Asp/Asn) ligase.